The following is a 187-amino-acid chain: Ubiquinol-cytochrome c reductase iron-sulfur subunit (187 aa).

Residues 15–35 (LYYATAGAGAVATGAAVWPLI) traverse the membrane as a helical segment. Residues 89–185 (QLGQLVDTNA…AKFIDETTIQ (97 aa)) form the Rieske domain. [2Fe-2S] cluster contacts are provided by Cys-129, His-131, Cys-149, and His-152. Residues Cys-134 and Cys-151 are joined by a disulfide bond.

Belongs to the Rieske iron-sulfur protein family. The main subunits of complex b-c1 are: cytochrome b, cytochrome c1 and the Rieske protein. The cofactor is [2Fe-2S] cluster.

It is found in the cell membrane. The catalysed reaction is a quinol + 2 Fe(III)-[cytochrome c](out) = a quinone + 2 Fe(II)-[cytochrome c](out) + 2 H(+)(out). Functionally, component of the ubiquinol-cytochrome c reductase complex (complex III or cytochrome b-c1 complex), which is a respiratory chain that generates an electrochemical potential coupled to ATP synthesis. This Cereibacter sphaeroides (Rhodobacter sphaeroides) protein is Ubiquinol-cytochrome c reductase iron-sulfur subunit (petA).